A 440-amino-acid chain; its full sequence is Serine/threonine-protein kinase 2 (440 aa).

The region spanning 85-440 is the Protein kinase domain; it reads NDDFYHISTG…FSNWINGESC (356 aa). Residues 91 to 99 and lysine 115 each bind ATP; that span reads ISTGGYGIV. Residue aspartate 306 is the Proton acceptor of the active site.

Belongs to the protein kinase superfamily. Ser/Thr protein kinase family. Poxviruses subfamily. Post-translationally, phosphorylated in vivo. Autophosphorylated in vitro.

The protein resides in the host endoplasmic reticulum. Its subcellular location is the host endoplasmic reticulum-Golgi intermediate compartment. It catalyses the reaction L-seryl-[protein] + ATP = O-phospho-L-seryl-[protein] + ADP + H(+). The enzyme catalyses L-threonyl-[protein] + ATP = O-phospho-L-threonyl-[protein] + ADP + H(+). Essential serine-protein kinase involved in the early stage of virion morphogenesis. This Sus scrofa (Pig) protein is Serine/threonine-protein kinase 2 (OPG054).